Here is a 495-residue protein sequence, read N- to C-terminus: Membrane-bound glycerophospholipid O-acyltransferase 1 (495 aa).

The next 6 helical transmembrane spans lie at 34–54 (VNFV…RIYL), 70–90 (IFGI…LFVL), 126–146 (IYIF…MIVT), 180–200 (PSFL…AGPC), 238–258 (TGAV…FLTL), and 297–317 (YFAW…FSGV). Residues Asn350 and His381 contribute to the active site. 3 helical membrane passes run 371–391 (VLTF…YFTF), 426–446 (TWAV…MLAV), and 450–470 (ISLY…IILF). Residue Ser488 is modified to Phosphoserine.

This sequence belongs to the membrane-bound acyltransferase family. As to expression, expressed in neutrophils.

Its subcellular location is the endoplasmic reticulum membrane. It carries out the reaction a 1-acyl-sn-glycero-3-phospho-L-serine + an acyl-CoA = a 1,2-diacyl-sn-glycero-3-phospho-L-serine + CoA. The enzyme catalyses a 1-acyl-sn-glycero-3-phosphocholine + an acyl-CoA = a 1,2-diacyl-sn-glycero-3-phosphocholine + CoA. The catalysed reaction is a 1-acyl-sn-glycero-3-phosphoethanolamine + an acyl-CoA = a 1,2-diacyl-sn-glycero-3-phosphoethanolamine + CoA. It catalyses the reaction 1-(9Z-octadecenoyl)-sn-glycero-3-phospho-L-serine + (9Z)-octadecenoyl-CoA = 1,2-di-(9Z)-octadecenoyl-sn-glycero-3-phospho-L-serine + CoA. It carries out the reaction 1-(9Z-octadecenoyl)-sn-glycero-3-phospho-L-serine + octadecanoyl-CoA = 1-(9Z-octadecenoyl)-2-octadecanoyl-sn-glycero-3-phospho-L-serine + CoA. The enzyme catalyses 1-(9Z-octadecenoyl)-sn-glycero-3-phospho-L-serine + (9Z)-hexadecenoyl-CoA = 1-(9Z-octadecenoyl)-2-(9Z-hexadecenoyl)-sn-glycero-3-phospho-L-serine + CoA. The catalysed reaction is 1-(9Z-octadecenoyl)-sn-glycero-3-phospho-L-serine + (9Z,12Z)-octadecadienoyl-CoA = 1-(9Z-octadecenoyl)-2-(9Z,12Z-octadienoyl)-sn-glycero-3-phospho-L-serine + CoA. It catalyses the reaction 1-hexadecanoyl-sn-glycero-3-phosphocholine + (9Z)-octadecenoyl-CoA = 1-hexadecanoyl-2-(9Z-octadecenoyl)-sn-glycero-3-phosphocholine + CoA. It carries out the reaction a 1-O-(1Z-alkenyl)-sn-glycero-3-phosphoethanolamine + (9Z)-octadecenoyl-CoA = 1-O-(1Z)-alkenyl-2-(9Z)-octadecenoyl-sn-glycero-3-phosphoethanolamine + CoA. The enzyme catalyses 1-octadecanoyl-sn-glycero-3-phosphoethanolamine + (9Z)-octadecenoyl-CoA = 1-octadecanoyl-2-(9Z-octadecenoyl)-sn-glycero-3-phosphoethanolamine + CoA. The catalysed reaction is 1-(9Z-octadecenoyl)-sn-glycero-3-phosphoethanolamine + (9Z)-octadecenoyl-CoA = 1,2-di-(9Z-octadecenoyl)-sn-glycero-3-phosphoethanolamine + CoA. It catalyses the reaction 1-hexadecanoyl-sn-glycero-3-phosphoethanolamine + (9Z)-octadecenoyl-CoA = 1-hexadecanoyl-2-(9Z-octadecenoyl)-sn-glycero-3-phosphoethanolamine + CoA. It carries out the reaction 1-(10Z-heptadecenoyl)-sn-glycero-3-phosphoethanolamine + hexadecanoyl-CoA = 1-(10Z-heptadecenoyl)-2-hexadecanoyl-sn-glycero-3-phosphoethanolamine + CoA. The enzyme catalyses 1-(10Z-heptadecenoyl)-sn-glycero-3-phosphoethanolamine + (9Z)-octadecenoyl-CoA = 1-(10Z-heptadecenoyl)-2-(9Z-octadecenoyl)-sn-glycero-3-phosphoethanolamine + CoA. The protein operates within lipid metabolism; phospholipid metabolism. With respect to regulation, partially inhibited by thimerosal. Its function is as follows. Acyltransferase which catalyzes the transfer of an acyl group from an acyl-CoA towards a lysophospholipid producing a phospholipid and participates in the reacylation step of the phospholipid remodeling pathway also known as the Lands cycle. Acts on lysophosphatidylserine (1-acyl-2-hydroxy-sn-glycero-3-phospho-L-serine or LPS) and lysophosphatidylethanolamine (1-acyl-sn-glycero-3-phosphoethanolamine or LPE), and to a lesser extend lysophosphatidylcholine. Prefers oleoyl-CoA as the acyl donor and 1-oleoyl-LPE as acceptor. May play a role in neurite outgrowth during neuronal differentiation. The sequence is that of Membrane-bound glycerophospholipid O-acyltransferase 1 from Homo sapiens (Human).